The sequence spans 325 residues: Probable exonuclease subunit 1 (325 aa).

In terms of assembly, could consist of two subunits: D13 and D12.

In terms of biological role, possible exonuclease involved in phage DNA recombination, replication, and repair. This is Probable exonuclease subunit 1 (D12) from Escherichia coli (Enterobacteria phage T5).